Here is a 186-residue protein sequence, read N- to C-terminus: Lipid A acyltransferase PagP (186 aa).

Positions 1–25 (MNVSKYVAIFSFVFIQLISVGKVFA) are cleaved as a signal peptide. Catalysis depends on residues histidine 58, aspartate 101, and serine 102.

Belongs to the lipid A palmitoyltransferase family. As to quaternary structure, homodimer.

The protein resides in the cell outer membrane. It catalyses the reaction a lipid A + a 1,2-diacyl-sn-glycero-3-phosphocholine = a hepta-acyl lipid A + a 2-acyl-sn-glycero-3-phosphocholine. The catalysed reaction is a lipid IVA + a 1,2-diacyl-sn-glycero-3-phosphocholine = a lipid IVB + a 2-acyl-sn-glycero-3-phosphocholine. It carries out the reaction a lipid IIA + a 1,2-diacyl-sn-glycero-3-phosphocholine = a lipid IIB + a 2-acyl-sn-glycero-3-phosphocholine. In terms of biological role, transfers a fatty acid residue from the sn-1 position of a phospholipid to the N-linked hydroxyfatty acid chain on the proximal unit of lipid A or its precursors. In Shigella boydii serotype 4 (strain Sb227), this protein is Lipid A acyltransferase PagP.